Consider the following 238-residue polypeptide: Probable transcriptional regulatory protein Mmwyl1_2868 (238 aa).

Belongs to the TACO1 family.

It is found in the cytoplasm. This is Probable transcriptional regulatory protein Mmwyl1_2868 from Marinomonas sp. (strain MWYL1).